Consider the following 639-residue polypeptide: Probable methyltransferase PMT18 (639 aa).

The Cytoplasmic portion of the chain corresponds to 1-19; sequence MAKENSSHSLAEAKRKRLT. The helical; Signal-anchor for type II membrane protein transmembrane segment at 20–42 threads the bilayer; that stretch reads WILCVSGLCILSYVLGSWQTNTV. The tract at residues 41–86 is disordered; that stretch reads TVPTSSSEAYSRMGCDETSTTTRAQTTQTQTNPSSDDTSSSLSSSE. At 43–639 the chain is on the lumenal side; the sequence is PTSSSEAYSR…VKSYWTGPSS (597 aa). Over residues 58–85 the composition is skewed to low complexity; the sequence is TSTTTRAQTTQTQTNPSSDDTSSSLSSS. Residues asparagine 104 and asparagine 427 are each glycosylated (N-linked (GlcNAc...) asparagine).

Belongs to the methyltransferase superfamily.

Its subcellular location is the endoplasmic reticulum membrane. The protein is Probable methyltransferase PMT18 of Arabidopsis thaliana (Mouse-ear cress).